The primary structure comprises 360 residues: UDP-3-O-acylglucosamine N-acyltransferase (360 aa).

His-256 functions as the Proton acceptor in the catalytic mechanism. The disordered stretch occupies residues 341-360; that stretch reads EGSGAETAARPDDDRDEGRG. Residues 349–360 are compositionally biased toward basic and acidic residues; the sequence is ARPDDDRDEGRG.

This sequence belongs to the transferase hexapeptide repeat family. LpxD subfamily. Homotrimer.

The enzyme catalyses a UDP-3-O-[(3R)-3-hydroxyacyl]-alpha-D-glucosamine + a (3R)-hydroxyacyl-[ACP] = a UDP-2-N,3-O-bis[(3R)-3-hydroxyacyl]-alpha-D-glucosamine + holo-[ACP] + H(+). It functions in the pathway bacterial outer membrane biogenesis; LPS lipid A biosynthesis. In terms of biological role, catalyzes the N-acylation of UDP-3-O-acylglucosamine using 3-hydroxyacyl-ACP as the acyl donor. Is involved in the biosynthesis of lipid A, a phosphorylated glycolipid that anchors the lipopolysaccharide to the outer membrane of the cell. The chain is UDP-3-O-acylglucosamine N-acyltransferase from Rhodopseudomonas palustris (strain ATCC BAA-98 / CGA009).